Reading from the N-terminus, the 380-residue chain is MAPNLRKSHPLLKMVNNSLIDLPTPSNISAWWNFGSLLGICLMTQILTGLLLAMHYTADTTLAFSSVAHTCRNVQYGWLIRNLHANGASFFFICIYLHIGRGFYYGSYLYKETWNTGIILLLTLMATAFVGYVLPWGQMSFWGATVITNLFSAIPYIGQTLVEWAWGGFSVDNPTLTRFFALHFLLPFAIAGLTLIHLTFLHESGSNNPLGIVSNCDKIPFHPYFTLKDILGFTLMFLPLTSLALFSPNLLGDPENFTPANPLVTPPHIKPEWYFLFAYAILRSIPNKLGGVLALAASVLVLFLSPFLHKAKQRTMTFRPLSQLLFWILVTNLFILTWVGSQPVEHPFIIIGQLASVTYFTILLILFPAIGALENKMLNF.

4 consecutive transmembrane segments (helical) span residues 34-54 (FGSL…LLAM), 78-99 (WLIR…YLHI), 114-134 (WNTG…GYVL), and 179-199 (FFAL…IHLT). Residues His-84 and His-98 each coordinate heme b. Residues His-183 and His-197 each coordinate heme b. His-202 lines the a ubiquinone pocket. The next 4 helical transmembrane spans lie at 227-247 (LKDI…ALFS), 289-309 (LGGV…PFLH), 321-341 (LSQL…WVGS), and 348-368 (FIII…ILFP).

It belongs to the cytochrome b family. As to quaternary structure, the cytochrome bc1 complex contains 11 subunits: 3 respiratory subunits (MT-CYB, CYC1 and UQCRFS1), 2 core proteins (UQCRC1 and UQCRC2) and 6 low-molecular weight proteins (UQCRH/QCR6, UQCRB/QCR7, UQCRQ/QCR8, UQCR10/QCR9, UQCR11/QCR10 and a cleavage product of UQCRFS1). This cytochrome bc1 complex then forms a dimer. The cofactor is heme b.

Its subcellular location is the mitochondrion inner membrane. Its function is as follows. Component of the ubiquinol-cytochrome c reductase complex (complex III or cytochrome b-c1 complex) that is part of the mitochondrial respiratory chain. The b-c1 complex mediates electron transfer from ubiquinol to cytochrome c. Contributes to the generation of a proton gradient across the mitochondrial membrane that is then used for ATP synthesis. The protein is Cytochrome b (MT-CYB) of Thalassoica antarctica (Antarctic petrel).